The primary structure comprises 270 residues: Cyclohexanol dehydrogenase (270 aa).

NAD(+)-binding residues include Arg-19, Asp-40, Asp-78, Val-79, Asn-105, Tyr-176, Lys-180, Ile-209, and Thr-211. The Proton acceptor role is filled by Tyr-176.

Belongs to the short-chain dehydrogenases/reductases (SDR) family. As to quaternary structure, homodimer.

It localises to the cytoplasm. It catalyses the reaction cyclohexanol + NAD(+) = cyclohexanone + NADH + H(+). Its activity is regulated as follows. Activity is enhanced by the addition of Ba(2+) and Mg(2+), but inhibited by the addition of Al(3+), Ca(2+), Co(2+), Cu(2+), Mn(2+) and Zn(2+). In terms of biological role, catalyzes the oxidation of cyclohexanol to cyclohexanone. Can also use a broad range of other alcohols, including trans-cyclohexane-1,2-diol, trans-cyclopentane-1,2-diol, cyclopentanol, hexane-1,2-diol, ethanol, 1-propanol, 1-butanol, 1-pentanol and 1-hexanol. The polypeptide is Cyclohexanol dehydrogenase (Rhodococcus sp. (strain TK6)).